The chain runs to 825 residues: Zygotic DNA replication licensing factor mcm6-B (825 aa).

The segment at 159 to 186 adopts a C4-type zinc-finger fold; the sequence is CLDCQTLVRDVEQQFKYTQPSICRNPVC. An MCM domain is found at 347–554; the sequence is LYHNLCTSLF…TDYAIARRIV (208 aa). ATP is bound at residue 397–404; that stretch reads GDPSTAKS. Residues 529–532 carry the Arginine finger motif; sequence SRFD. The span at 668–679 shows a compositional bias: acidic residues; that stretch reads DQEDEHEVEEPQ. The interval 668–690 is disordered; it reads DQEDEHEVEEPQEGINGDADVPN.

Belongs to the MCM family. In terms of assembly, component of the mcm2-7 complex (RLF-M). The complex forms a toroidal hexameric ring with the proposed subunit order mcm2-mcm6-mcm4-mcm7-mcm3-mcm5 (By simililarity). Begins to associate with zmcm3, mcm4 and mcm7 into mcm complexes at the neurula stage.

The protein resides in the nucleus. The enzyme catalyses ATP + H2O = ADP + phosphate + H(+). Its function is as follows. Acts as a component of the mcm2-7 complex (mcm complex) which is the putative replicative helicase essential for 'once per cell cycle' DNA replication initiation and elongation in eukaryotic cells. The active ATPase sites in the mcm2-7 ring are formed through the interaction surfaces of two neighboring subunits such that a critical structure of a conserved arginine finger motif is provided in trans relative to the ATP-binding site of the Walker A box of the adjacent subunit. The six ATPase active sites, however, are likely to contribute differentially to the complex helicase activity. The existence of maternal and zygotic forms of mcm3 and mcm6 suggests that specific forms of mcm2-7 complexes may be used during different stages of development. May replace mmcm6 in the mcm2-7 complex. This Xenopus laevis (African clawed frog) protein is Zygotic DNA replication licensing factor mcm6-B (zmcm6-b).